The primary structure comprises 431 residues: Tol-Pal system protein TolB (431 aa).

Residues 1-26 form the signal peptide; it reads MSLMTKLGFRALVASCLITAGSAANA. Residues 411-431 are disordered; it reads PQILSVQGGSVREPSWGPFMQ.

Belongs to the TolB family. In terms of assembly, the Tol-Pal system is composed of five core proteins: the inner membrane proteins TolA, TolQ and TolR, the periplasmic protein TolB and the outer membrane protein Pal. They form a network linking the inner and outer membranes and the peptidoglycan layer.

The protein resides in the periplasm. Its function is as follows. Part of the Tol-Pal system, which plays a role in outer membrane invagination during cell division and is important for maintaining outer membrane integrity. The polypeptide is Tol-Pal system protein TolB (Burkholderia lata (strain ATCC 17760 / DSM 23089 / LMG 22485 / NCIMB 9086 / R18194 / 383)).